A 246-amino-acid chain; its full sequence is Zorya protein ZorB (246 aa).

The chain crosses the membrane as a helical span at residues 20 to 40; that stretch reads FWISYADLMTAMMVLFLVVMV. Residues 86-218 enclose the OmpA-like domain; the sequence is CHDNRISFGE…RVELRMQFFG (133 aa).

This sequence belongs to the MotB family.

Its subcellular location is the cell inner membrane. Its function is as follows. Component of antiviral defense system Zorya type I, composed of ZorA, ZorB, ZorC and ZorD. Expression of Zorya type I in E.coli (strain MG1655) confers 10,000-fold resistance to phage SECphi27, 100-fold resistance to lambda, and 10-fold resistance to T7. While most T7 infected Zorya-containing cells undergo abortive infection, a minority produce viable phage progeny. These eventually accumulate to a high multiplicity of infection, leading to culture collapse by 2 hours after initial infection. ZorA and ZorB probably assemble in the cell inner membrane and exert their effect there. This chain is Zorya protein ZorB, found in Escherichia coli O139:H28 (strain E24377A / ETEC).